The chain runs to 386 residues: Pepsin A (386 aa).

Positions 1–15 are cleaved as a signal peptide; sequence MKWLLLISLVALSEC. Residues 16–60 constitute a propeptide, activation peptide; it reads AIVKVPLVRKKSLRQNLIEHGLLNDFLKNQSPNPASKYFPQEPTV. The region spanning 74-383 is the Peptidase A1 domain; the sequence is YFGTIGIGTP…DRANNQVGLA (310 aa). Residue Asp92 is part of the active site. Cystine bridges form between Cys105/Cys110 and Cys266/Cys270. Residue Asp275 is part of the active site. Cys309 and Cys342 are oxidised to a cystine.

Belongs to the peptidase A1 family.

The protein resides in the secreted. The enzyme catalyses Preferential cleavage: hydrophobic, preferably aromatic, residues in P1 and P1' positions. Cleaves 1-Phe-|-Val-2, 4-Gln-|-His-5, 13-Glu-|-Ala-14, 14-Ala-|-Leu-15, 15-Leu-|-Tyr-16, 16-Tyr-|-Leu-17, 23-Gly-|-Phe-24, 24-Phe-|-Phe-25 and 25-Phe-|-Tyr-26 bonds in the B chain of insulin.. Its function is as follows. Shows particularly broad specificity; although bonds involving phenylalanine and leucine are preferred, many others are also cleaved to some extent. This chain is Pepsin A (PGA), found in Canis lupus familiaris (Dog).